The sequence spans 512 residues: Aldehyde dehydrogenase B (512 aa).

Active-site residues include Glu268 and Cys307.

In terms of assembly, homotetramer.

It carries out the reaction an aldehyde + NADP(+) + H2O = a carboxylate + NADPH + 2 H(+). The catalysed reaction is acetaldehyde + NADP(+) + H2O = acetate + NADPH + 2 H(+). The enzyme catalyses chloroacetaldehyde + NADP(+) + H2O = chloroacetate + NADPH + 2 H(+). It catalyses the reaction propanal + NADP(+) + H2O = propanoate + NADPH + 2 H(+). Its activity is regulated as follows. Magnesium increases enzyme activity with various substrates. Catalyzes the NADP(+)-dependent oxidation of diverse aldehydes to their corresponding carboxylic acids, with a preference for acetaldehyde and chloroacetaldehyde. May play a role in detoxifying aldehydes present during stationary phase. Cannot use NAD(+) instead of NADP(+) as the electron acceptor. To a lesser extent is also able to oxidize propionaldehyde (propanal), benzaldehyde, mafosfamide, and 4-hydroperoxycyclophosphamide. Does not use either glyceraldehyde or glycolaldehyde as substrates. The sequence is that of Aldehyde dehydrogenase B from Escherichia coli (strain K12).